The chain runs to 620 residues: Glutathione-regulated potassium-efflux system protein KefC (620 aa).

12 helical membrane-spanning segments follow: residues 4 to 24, 26 to 46, 54 to 74, 90 to 110, 114 to 134, 149 to 169, 178 to 198, 218 to 238, 270 to 290, 294 to 314, 327 to 347, and 359 to 379; these read HTLIQALIYLGSAALIVPIAV, LGLGSVLGYLIAGCIIGPWGL, SILHFAEIGVVLMLFIIGLEL, GALQMVICGGLLGLFCMLLGL, VAELIGMTLALSSTAIAMQAM, FAVLLFQDIAAIPLVAMIPLL, MGAFALSALKVAGALVLVVLL, VFSAVALFLVFGFGLLLEEVG, GLLLGLFFIGVGMSIDFGTLL, LRIVILLLGFLIIKIAMLWLI, WFAVLLGQGSEFAFVVFGTAQ, and SLTLAVALSMAATPILLVILN. The RCK N-terminal domain maps to 399-518; the sequence is QPRVIIAGFG…AGVEKPERET (120 aa). The interval 597–620 is disordered; it reads GWQGTEEGKHTGNMADEPETKPSS.

This sequence belongs to the monovalent cation:proton antiporter 2 (CPA2) transporter (TC 2.A.37) family. KefC subfamily. As to quaternary structure, homodimer. Interacts with the regulatory subunit KefF.

It localises to the cell inner membrane. Its function is as follows. Pore-forming subunit of a potassium efflux system that confers protection against electrophiles. Catalyzes K(+)/H(+) antiport. This chain is Glutathione-regulated potassium-efflux system protein KefC, found in Shigella sonnei (strain Ss046).